We begin with the raw amino-acid sequence, 74 residues long: Control protein C.MunI (74 aa).

Positions 12-67 (LKKLRKEKTDLSQESFAAQIDLDRTYYSSIENGKRNVSLVNLEKISAGLGITLSEL) constitute an HTH cro/C1-type domain. Positions 23–42 (SQESFAAQIDLDRTYYSSIE) form a DNA-binding region, H-T-H motif.

Functionally, probably controls expression of its associated restriction-modification system MunI. The protein is Control protein C.MunI of Mycoplasma sp.